A 94-amino-acid polypeptide reads, in one-letter code: Integration host factor subunit beta (94 aa).

It belongs to the bacterial histone-like protein family. Heterodimer of an alpha and a beta chain.

Functionally, this protein is one of the two subunits of integration host factor, a specific DNA-binding protein that functions in genetic recombination as well as in transcriptional and translational control. This Xanthobacter autotrophicus (strain ATCC BAA-1158 / Py2) protein is Integration host factor subunit beta.